The chain runs to 504 residues: D-alanine--D-alanyl carrier protein ligase (504 aa).

152–153 (TS) serves as a coordination point for ATP. Aspartate 197 contacts D-alanine. 292–297 (NTYGPT) is a binding site for ATP. Valine 301 lines the D-alanine pocket. ATP is bound by residues aspartate 383, 394–397 (YNGR), and lysine 492. Lysine 492 lines the D-alanine pocket.

It belongs to the ATP-dependent AMP-binding enzyme family. DltA subfamily.

The protein localises to the cytoplasm. The enzyme catalyses holo-[D-alanyl-carrier protein] + D-alanine + ATP = D-alanyl-[D-alanyl-carrier protein] + AMP + diphosphate. It functions in the pathway cell wall biogenesis; lipoteichoic acid biosynthesis. Its function is as follows. Catalyzes the first step in the D-alanylation of lipoteichoic acid (LTA), the activation of D-alanine and its transfer onto the D-alanyl carrier protein (Dcp) DltC. In an ATP-dependent two-step reaction, forms a high energy D-alanyl-AMP intermediate, followed by transfer of the D-alanyl residue as a thiol ester to the phosphopantheinyl prosthetic group of the Dcp. D-alanylation of LTA plays an important role in modulating the properties of the cell wall in Gram-positive bacteria, influencing the net charge of the cell wall. This is D-alanine--D-alanyl carrier protein ligase from Bacillus cereus (strain Q1).